Reading from the N-terminus, the 357-residue chain is O-methyltransferase pgmB (357 aa).

Residue Asp206 participates in S-adenosyl-L-methionine binding. Catalysis depends on His256, which acts as the Proton acceptor.

This sequence belongs to the class I-like SAM-binding methyltransferase superfamily. Cation-independent O-methyltransferase family.

Its pathway is pigment biosynthesis. It participates in secondary metabolite biosynthesis. Functionally, O-methyltransferase; part of the gene cluster that mediates the biosynthesis of pleosporalin A, ascomycone A, as well as a third cryptic naphthoquinone derived pigment, all responsible for the coloration of conidia. Specifically methylates position C-6 of the pgmA product 3-acetonyl-1,6,8-trihydroxy-2-naphthaldehyde to yield fusarubinaldehyde. The pathway begins with the biosynthesis of the cyclized heptaketide 3-acetonyl-1,6,8-trihydroxy-2-naphthaldehyde by the NR-PKS pgmA. The C-6 hydroxyl group is further methylated by the O-methyltransferase pgmB to yield fusarubinaldehyde which is in turn oxidized by the cytochrome P450 monooxygenase pgmC at C-9. The C-1 hydroxyl group is then methylated spontaneously. Although pgmE, pgmD and pgmH are essential for the production of pleosporalin A, it is not the case for the 2 other final products and it remains difficult to assign a specific function to each enzyme. PgmF and pgmG seem not to be involved in pigment biosynthesis although they were regulated by the cluster-specific transcription factor pgmR. This chain is O-methyltransferase pgmB, found in Aspergillus terreus (strain NIH 2624 / FGSC A1156).